We begin with the raw amino-acid sequence, 189 residues long: Small ribosomal subunit protein uS5 (189 aa).

The S5 DRBM domain maps to 22–85; sequence FVDKLVAINR…EAAKRDLIFV (64 aa).

The protein belongs to the universal ribosomal protein uS5 family. As to quaternary structure, part of the 30S ribosomal subunit. Contacts proteins S4 and S8.

Functionally, with S4 and S12 plays an important role in translational accuracy. In terms of biological role, located at the back of the 30S subunit body where it stabilizes the conformation of the head with respect to the body. The polypeptide is Small ribosomal subunit protein uS5 (Sinorhizobium medicae (strain WSM419) (Ensifer medicae)).